The chain runs to 670 residues: DNA ligase (670 aa).

NAD(+)-binding positions include 32–36 (DSEYD), 81–82 (SL), and E114. Residue K116 is the N6-AMP-lysine intermediate of the active site. 4 residues coordinate NAD(+): R137, E174, K291, and K315. C409, C412, C427, and C433 together coordinate Zn(2+). In terms of domain architecture, BRCT spans 592-670 (ASENLFKDKT…EEEFLAQITR (79 aa)).

The protein belongs to the NAD-dependent DNA ligase family. LigA subfamily. Mg(2+) serves as cofactor. The cofactor is Mn(2+).

The enzyme catalyses NAD(+) + (deoxyribonucleotide)n-3'-hydroxyl + 5'-phospho-(deoxyribonucleotide)m = (deoxyribonucleotide)n+m + AMP + beta-nicotinamide D-nucleotide.. In terms of biological role, DNA ligase that catalyzes the formation of phosphodiester linkages between 5'-phosphoryl and 3'-hydroxyl groups in double-stranded DNA using NAD as a coenzyme and as the energy source for the reaction. It is essential for DNA replication and repair of damaged DNA. In Haemophilus influenzae (strain PittEE), this protein is DNA ligase.